The sequence spans 31 residues: Alpha-conotoxin Li1.12 (31 aa).

A propeptide spanning residues 1–15 (AGNAKMSALMALTIR) is cleaved from the precursor. 2 disulfide bridges follow: Cys-17–Cys-23 and Cys-18–Cys-30. Cys-30 bears the Cysteine amide mark.

Belongs to the conotoxin A superfamily. As to expression, expressed by the venom duct.

Its subcellular location is the secreted. In terms of biological role, alpha-conotoxins act on postsynaptic membranes, they bind to the nicotinic acetylcholine receptors (nAChR) and thus inhibit them. This toxin inhibits alpha-3-beta-4, alpha-6/alpha-3-beta-4, and alpha-2-beta-4 nAChRs. The protein is Alpha-conotoxin Li1.12 of Conus lividus (Livid cone).